The chain runs to 364 residues: MSLPRIAVDAMGGDEGVRVMVEGAALARRRHDRFKFLLVGDEARIKQALENHPNLRGASEILHAPDIVSGDEKPTQALRRAKTTSMGMAINAVKRGEAGAAVSAGNTGALMAMAKLALRTLPGIDRPALSALLPTLGDNDLVMLDLGANTECDARNLVQFAIMGAAYARIVNGLDAPRVRLLNIGTEETKGTDSLRDAATELKALAGDLALSFDGFTEADKLSRGDVDVVVTDGFSGNIALKSMEGAARFVADLLRRSFSSSLRSKLGFLISRPATELLKHHLDPNNHNGAVFLGLNGIVVKSHGGASALGVANAVAVTARLLEENLTERIKADLARVGAEAIRTSGRSGGKSKSSAAREDGAA.

Residues 343-364 (IRTSGRSGGKSKSSAAREDGAA) are disordered.

It belongs to the PlsX family. Homodimer. Probably interacts with PlsY.

It is found in the cytoplasm. The catalysed reaction is a fatty acyl-[ACP] + phosphate = an acyl phosphate + holo-[ACP]. It participates in lipid metabolism; phospholipid metabolism. Catalyzes the reversible formation of acyl-phosphate (acyl-PO(4)) from acyl-[acyl-carrier-protein] (acyl-ACP). This enzyme utilizes acyl-ACP as fatty acyl donor, but not acyl-CoA. The chain is Phosphate acyltransferase from Novosphingobium aromaticivorans (strain ATCC 700278 / DSM 12444 / CCUG 56034 / CIP 105152 / NBRC 16084 / F199).